The following is a 453-amino-acid chain: Growth/differentiation factor 9 (453 aa).

Residues 1–25 (MALPNKFFLWFCCFAWLCFPISLDS) form the signal peptide. Residues 26 to 318 (QPSRGEAQIV…EGVRLSRHRR (293 aa)) constitute a propeptide that is removed on maturation. Asn106, Asn163, Asn236, Asn255, and Asn269 each carry an N-linked (GlcNAc...) asparagine glycan. Residues 281–300 (SLHPKRKPSQDPDQKRGLSA) are disordered. N-linked (GlcNAc...) asparagine glycosylation is present at Asn337. Cystine bridges form between Cys352–Cys418, Cys381–Cys450, and Cys385–Cys452.

This sequence belongs to the TGF-beta family. In terms of assembly, homodimer or heterodimer (Potential). But, in contrast to other members of this family, cannot be disulfide-linked. Phosphorylated; phosphorylation is critical for GDF9 function.

Its subcellular location is the secreted. Its function is as follows. Required for ovarian folliculogenesis. The chain is Growth/differentiation factor 9 (GDF9) from Bos taurus (Bovine).